Consider the following 360-residue polypeptide: 3-dehydroquinate synthase (360 aa).

NAD(+) contacts are provided by residues 72-77, 106-110, 130-131, Lys143, Lys152, and 170-173; these read DGEEFK, GVVGD, TT, and TLTT. Residues Glu185, His248, and His265 each contribute to the Zn(2+) site.

This sequence belongs to the sugar phosphate cyclases superfamily. Dehydroquinate synthase family. The cofactor is Co(2+). Zn(2+) is required as a cofactor. It depends on NAD(+) as a cofactor.

It localises to the cytoplasm. It catalyses the reaction 7-phospho-2-dehydro-3-deoxy-D-arabino-heptonate = 3-dehydroquinate + phosphate. The protein operates within metabolic intermediate biosynthesis; chorismate biosynthesis; chorismate from D-erythrose 4-phosphate and phosphoenolpyruvate: step 2/7. In terms of biological role, catalyzes the conversion of 3-deoxy-D-arabino-heptulosonate 7-phosphate (DAHP) to dehydroquinate (DHQ). The sequence is that of 3-dehydroquinate synthase from Geobacter metallireducens (strain ATCC 53774 / DSM 7210 / GS-15).